The following is a 212-amino-acid chain: Peptide methionine sulfoxide reductase MsrA (212 aa).

Cys52 is a catalytic residue.

The protein belongs to the MsrA Met sulfoxide reductase family.

The catalysed reaction is L-methionyl-[protein] + [thioredoxin]-disulfide + H2O = L-methionyl-(S)-S-oxide-[protein] + [thioredoxin]-dithiol. It catalyses the reaction [thioredoxin]-disulfide + L-methionine + H2O = L-methionine (S)-S-oxide + [thioredoxin]-dithiol. Its function is as follows. Has an important function as a repair enzyme for proteins that have been inactivated by oxidation. Catalyzes the reversible oxidation-reduction of methionine sulfoxide in proteins to methionine. The protein is Peptide methionine sulfoxide reductase MsrA of Escherichia coli (strain ATCC 8739 / DSM 1576 / NBRC 3972 / NCIMB 8545 / WDCM 00012 / Crooks).